The following is a 214-amino-acid chain: Adenylate kinase (214 aa).

10-15 (GAGKGT) lines the ATP pocket. The segment at 30–59 (STGDMLRAAIKAGTELGKQAKAVIDAGQLV) is NMP. AMP-binding positions include T31, R36, 57-59 (QLV), 85-88 (GFPR), and Q92. Positions 122–159 (GRRAHLPSGRTYHVVYNPPKVEGKDDVTGEDLVVRDDD) are LID. ATP contacts are provided by residues R123 and 132-133 (TY). 2 residues coordinate AMP: R156 and R167. K200 lines the ATP pocket.

The protein belongs to the adenylate kinase family. In terms of assembly, monomer.

The protein resides in the cytoplasm. The catalysed reaction is AMP + ATP = 2 ADP. It functions in the pathway purine metabolism; AMP biosynthesis via salvage pathway; AMP from ADP: step 1/1. Catalyzes the reversible transfer of the terminal phosphate group between ATP and AMP. Plays an important role in cellular energy homeostasis and in adenine nucleotide metabolism. The protein is Adenylate kinase of Vibrio parahaemolyticus serotype O3:K6 (strain RIMD 2210633).